Consider the following 203-residue polypeptide: ADP-ribosylation factor-like protein 6-interacting protein 1 (203 aa).

Topologically, residues 1-41 (MAEGDNRSSNLLAVETASLEEQLQGWGEVMLMADKVLRWER) are cytoplasmic. A helical transmembrane segment spans residues 42–62 (AWFPPAIMGVVSLLFLIIYYL). Residues 63–65 (DPS) lie on the Lumenal side of the membrane. A helical membrane pass occupies residues 66–86 (VLSGVSCFVMFLCLADYLVPI). The Cytoplasmic portion of the chain corresponds to 87-133 (LAPRIFGSNKWTTEQQQRFHEICSNLVKTRRRAVGWWKRLFSLKEEK). Residues 134–175 (PKMYFMTMIISLAAVAWVGQQVHNLLLTYLIVTFVLLLPGLN) traverse the membrane as a helical segment. The Lumenal segment spans residues 176–203 (QHGIILKYIGMAKREINKLLKQKEKKNE).

The protein belongs to the ARL6ip family. As to quaternary structure, homooligomer. Heterodimer with ARL6IP5. Interacts with ARL6. Interacts with TMEM33. Interacts with ATL1. As to expression, expressed in the cerebral cortex, cerebellum, hippocampus, olfactory bulbs, medulla oblongate and limbic system (at protein level). Ubiquitous. Expressed in all hematopoietic cell lineages, with highest levels in early myeloid progenitor cells.

The protein resides in the endomembrane system. It is found in the endoplasmic reticulum membrane. The protein localises to the endoplasmic reticulum. Its function is as follows. Positively regulates SLC1A1/EAAC1-mediated glutamate transport by increasing its affinity for glutamate in a PKC activity-dependent manner. Promotes the catalytic efficiency of SLC1A1/EAAC1 probably by reducing its interaction with ARL6IP5, a negative regulator of SLC1A1/EAAC1-mediated glutamate transport. Plays a role in the formation and stabilization of endoplasmic reticulum tubules. Negatively regulates apoptosis, possibly by modulating the activity of caspase-9 (CASP9). Inhibits cleavage of CASP9-dependent substrates and downstream markers of apoptosis but not CASP9 itself. May be involved in protein transport, membrane trafficking, or cell signaling during hematopoietic maturation. The sequence is that of ADP-ribosylation factor-like protein 6-interacting protein 1 (Arl6ip1) from Mus musculus (Mouse).